A 487-amino-acid chain; its full sequence is Cobyric acid synthase (487 aa).

Residues 248-435 (VLKVIVPVLP…LHGLFEGSQS (188 aa)) form the GATase cobBQ-type domain. The active-site Nucleophile is the Cys-329. Residue His-427 is part of the active site.

Belongs to the CobB/CobQ family. CobQ subfamily.

It functions in the pathway cofactor biosynthesis; adenosylcobalamin biosynthesis. Its function is as follows. Catalyzes amidations at positions B, D, E, and G on adenosylcobyrinic A,C-diamide. NH(2) groups are provided by glutamine, and one molecule of ATP is hydrogenolyzed for each amidation. In Pseudomonas entomophila (strain L48), this protein is Cobyric acid synthase.